Reading from the N-terminus, the 555-residue chain is Glutamine--tRNA ligase (555 aa).

The 'HIGH' region motif lies at 34–44 (PEPNGYLHIGH). ATP is bound by residues 35–37 (EPN) and 41–47 (HIGHAKS). Positions 67 and 212 each coordinate L-glutamine. ATP-binding positions include threonine 231, 261-262 (RL), and 269-271 (MSK). The short motif at 268-272 (VMSKR) is the 'KMSKS' region element. Positions 317–324 (TKQDNTIE) are interaction with tRNA.

Belongs to the class-I aminoacyl-tRNA synthetase family. As to quaternary structure, monomer.

It is found in the cytoplasm. It catalyses the reaction tRNA(Gln) + L-glutamine + ATP = L-glutaminyl-tRNA(Gln) + AMP + diphosphate. In Salmonella choleraesuis (strain SC-B67), this protein is Glutamine--tRNA ligase.